The following is a 294-amino-acid chain: 33 kDa chaperonin (294 aa).

Intrachain disulfides connect cysteine 231–cysteine 233 and cysteine 264–cysteine 267.

This sequence belongs to the HSP33 family. Post-translationally, under oxidizing conditions two disulfide bonds are formed involving the reactive cysteines. Under reducing conditions zinc is bound to the reactive cysteines and the protein is inactive.

The protein localises to the cytoplasm. Its function is as follows. Redox regulated molecular chaperone. Protects both thermally unfolding and oxidatively damaged proteins from irreversible aggregation. Plays an important role in the bacterial defense system toward oxidative stress. This Aeromonas salmonicida (strain A449) protein is 33 kDa chaperonin.